Reading from the N-terminus, the 360-residue chain is uncharacterized protein (360 aa).

In terms of domain architecture, ABC transporter spans 4-235 (LSLQHIQKIY…PANMFVAGFI (232 aa)). 37–44 (GPSGCGKS) serves as a coordination point for ATP.

Belongs to the ABC transporter superfamily.

This is an uncharacterized protein from Escherichia coli O6:H1 (strain CFT073 / ATCC 700928 / UPEC).